Consider the following 248-residue polypeptide: Probable transcriptional regulatory protein M446_6579 (248 aa).

Belongs to the TACO1 family.

It is found in the cytoplasm. The polypeptide is Probable transcriptional regulatory protein M446_6579 (Methylobacterium sp. (strain 4-46)).